The sequence spans 766 residues: FYVE, RhoGEF and PH domain-containing protein 4 (766 aa).

3 disordered regions span residues 1 to 20 (MEEIKPASASCVSKEKPSKV), 46 to 83 (NLNAPRTPGRHGLTTTPQQKLLSQHLPQRQGNDTDKTQ), and 134 to 188 (ETAT…ESPL). Residues 1–150 (MEEIKPASAS…SPTTDSCDGN (150 aa)) form an actin filament-binding region. 2 stretches are compositionally biased toward polar residues: residues 58–83 (LTTTPQQKLLSQHLPQRQGNDTDKTQ) and 145–157 (DSCDGNASDSSYR). The segment covering 167-184 (LEERGAETETKVQERENG) has biased composition (basic and acidic residues). One can recognise a DH domain in the interval 206-393 (KLHKIANELL…STAASHSNSA (188 aa)). Residues 422 to 521 (ELIKEGQILK…WIKALQETID (100 aa)) form the PH 1 domain. Residues 559–619 (DNEVTMCMKC…VCKDCYQIIS (61 aa)) form an FYVE-type zinc finger. Residues Cys-565, Cys-568, Cys-582, Cys-585, Cys-590, Cys-593, Cys-611, and Cys-614 each coordinate Zn(2+). A PH 2 domain is found at 643–740 (NSVVCSFLQY…WLKVILLAVT (98 aa)). A phosphoserine mark is found at Ser-702 and Ser-716. The tract at residues 742 to 766 (ETPGGPNEHPATLDDHPEPKKKSEC) is disordered. Positions 752–766 (ATLDDHPEPKKKSEC) are enriched in basic and acidic residues.

In terms of assembly, homooligomer. In terms of tissue distribution, expressed in different tissues, including brain, cerebellum, peripheral nerve, skeletal muscle, heart, uterus, placenta and testis.

The protein resides in the cytoplasm. Its subcellular location is the cytoskeleton. It localises to the cell projection. It is found in the filopodium. Activates CDC42, a member of the Ras-like family of Rho- and Rac proteins, by exchanging bound GDP for free GTP. Plays a role in regulating the actin cytoskeleton and cell shape. Activates MAPK8. The sequence is that of FYVE, RhoGEF and PH domain-containing protein 4 (FGD4) from Homo sapiens (Human).